The sequence spans 506 residues: Lysine--tRNA ligase (506 aa).

Positions 416 and 423 each coordinate Mg(2+).

It belongs to the class-II aminoacyl-tRNA synthetase family. Homodimer. Mg(2+) is required as a cofactor.

Its subcellular location is the cytoplasm. It carries out the reaction tRNA(Lys) + L-lysine + ATP = L-lysyl-tRNA(Lys) + AMP + diphosphate. In Xylella fastidiosa (strain 9a5c), this protein is Lysine--tRNA ligase (lysS).